A 64-amino-acid chain; its full sequence is Large ribosomal subunit protein bL32 (64 aa).

This sequence belongs to the bacterial ribosomal protein bL32 family.

The protein is Large ribosomal subunit protein bL32 of Mycoplasma mobile (strain ATCC 43663 / 163K / NCTC 11711) (Mesomycoplasma mobile).